Consider the following 636-residue polypeptide: Transcriptional repressor CTCFL (636 aa).

3 disordered regions span residues 17-38, 160-195, and 222-257; these read KEQKLKPGDLEEEKEEDGVQRV, ENPELTPDLDESTALKKPEEDEKDQLPPQGETDKRE, and LEEQQDPPAANQTSVPGAKAAKPKRRRQTKGKPQSF. Residues 160-170 are compositionally biased toward acidic residues; it reads ENPELTPDLDE. The span at 242–251 shows a compositional bias: basic residues; that stretch reads AKPKRRRQTK. 11 C2H2-type zinc fingers span residues 257–279, 285–307, 313–336, 342–364, 370–392, 398–421, 428–451, 458–480, 486–508, 514–537, and 546–572; these read FQCDTCPFTSSKLSTFNRHIKIH, HLCHLCLKAFRTVTLLRNHVNTH, HKCRDCDMAFVTSGELVRHRRYKH, FKCSLCKYASVEASKMKRHIRSH, FQCCQCAYASRDSYKLKRHMRTH, YECPTCHVRFTQSGTMKIHIAQKH, YECPHCATIIARKSDLRVHLRNLH, MKCRYCPAGFHERYALIQHQRTH, FKCKQCDYACKQERCLKAHMRMH, FSCLACNKHFRQKQLLTVHLRKYH, and HLCLKCDKRFSRWSNLQRHRKKCDPEH. The segment at 562–624 is disordered; sequence QRHRKKCDPE…AAGSQSPDHG (63 aa). Over residues 568-583 the composition is skewed to basic and acidic residues; it reads CDPEHETLAPNKDRRP.

This sequence belongs to the CTCF zinc-finger protein family. In terms of assembly, interacts with histones, PRMT7 and SETD1A. Interacts (via N-terminus) with BAG6/BAT3. Testis-specific.

It is found in the cytoplasm. The protein localises to the nucleus. Its function is as follows. Testis-specific DNA binding protein responsible for insulator function, nuclear architecture and transcriptional control, which probably acts by recruiting epigenetic chromatin modifiers. Plays a key role in gene imprinting in male germline, by participating in the establishment of differential methylation at the IGF2/H19 imprinted control region (ICR). Directly binds the unmethylated H19 ICR and recruits the PRMT7 methyltransferase, leading to methylate histone H4 'Arg-3' to form H4R3sme2. This probably leads to recruit de novo DNA methyltransferases at these sites. Seems to act as tumor suppressor. In association with DNMT1 and DNMT3B, involved in activation of BAG1 gene expression by binding to its promoter. Required for dimethylation of H3 lysine 4 (H3K4me2) of MYC and BRCA1 promoters. In Mus musculus (Mouse), this protein is Transcriptional repressor CTCFL (Ctcfl).